We begin with the raw amino-acid sequence, 362 residues long: mRNA decay activator protein ZFP36L2 (362 aa).

Over residues 100–109 the composition is skewed to basic and acidic residues; the sequence is SFSENGERSQ. Positions 100–126 are disordered; the sequence is SFSENGERSQHLLHLQQQQQQKAGAQV. Residues 111 to 120 show a composition bias toward low complexity; that stretch reads LLHLQQQQQQ. The RNA-binding signature appears at 130–135; it reads RYKTEL. 2 C3H1-type zinc fingers span residues 130–158 and 168–196; these read RYKT…HGFH and KYKT…HNAE. The RNA-binding stretch occupies residues 147-188; sequence YGEKCQFAHGFHELRSLTRHPKYKTELCRTFHTIGFCPYGPR. Disordered stretches follow at residues 225–244 and 306–362; these read DSPL…SSSS and SESP…ISDD. Residues 327–346 show a composition bias toward low complexity; sequence YLSGSLSSGSLSGSDSPTLD.

Phosphorylated.

The protein localises to the nucleus. Its subcellular location is the cytoplasm. In terms of biological role, zinc-finger RNA-binding protein that destabilizes several cytoplasmic AU-rich element (ARE)-containing mRNA transcripts by promoting their poly(A) tail removal or deadenylation, and hence provide a mechanism for attenuating protein synthesis. Acts as a 3'-untranslated region (UTR) ARE mRNA-binding adapter protein to communicate signaling events to the mRNA decay machinery. Functions by recruiting the CCR4-NOT deadenylase complex and probably other components of the cytoplasmic RNA decay machinery to the bound ARE-containing mRNAs, and hence promotes ARE-mediated mRNA deadenylation and decay processes. Binds to 3'-UTR ARE of numerous mRNAs. Also induces the degradation of ARE-containing mRNAs even in absence of poly(A) tail. Required for tubulogenesis during pronephros development. This is mRNA decay activator protein ZFP36L2 (zfp36l2) from Xenopus tropicalis (Western clawed frog).